The following is a 1066-amino-acid chain: Vinculin (1066 aa).

Residues 1–835 (MPVFHTRTIE…GAVAKVREAF (835 aa)) form an N-terminal globular head region. Ser-97 is subject to Phosphoserine. The interval 168-208 (MTKMAKMIDERQQELTHQEHRVMLVNSMNTVKELLPVLISA) is talin-interaction. Lys-173 carries the post-translational modification N6-acetyllysine. Repeat copies occupy residues 259 to 369 (ASKD…KVEN), 370 to 479 (AARK…KTNR), and 480 to 589 (AVAN…QMQE). The interval 259-589 (ASKDTEAMKR…LKDLKTQMQE (331 aa)) is 3 X 112 AA tandem repeats. Ser-260, Ser-272, Ser-275, Ser-290, Ser-346, and Ser-434 each carry phosphoserine. Lys-496 is modified (N6-acetyllysine). Position 537 is a phosphotyrosine (Tyr-537). Phosphoserine occurs at positions 574, 579, and 600. Residues Thr-604 and Thr-672 each carry the phosphothreonine modification. The residue at position 721 (Ser-721) is a Phosphoserine. The interval 741-764 (MANIQPQMLVAGATSIARRANRIL) is interaction with ACTN4. Ser-795 and Ser-809 each carry phosphoserine. Tyr-822 carries the post-translational modification Phosphotyrosine. The linker (Pro-rich) stretch occupies residues 836-878 (QPQEPDFPPPPPDLEQLRLTDELAPPKPPLPEGEVPPPRPPPP). The interval 857 to 887 (ELAPPKPPLPEGEVPPPRPPPPEEKDEEFPE) is disordered. Residues 860 to 876 (PPKPPLPEGEVPPPRPP) are compositionally biased toward pro residues. Positions 879–1066 (EEKDEEFPEQ…RWVRKTPWYQ (188 aa)) are C-terminal tail. 2 facilitates phospholipid membrane insertion regions span residues 935 to 978 (RLVR…KRIR) and 1052 to 1066 (AGFT…PWYQ). Phosphotyrosine; by SRC-type Tyr-kinases is present on Tyr-1065.

It belongs to the vinculin/alpha-catenin family. In terms of assembly, exhibits self-association properties. Part of a complex composed of THSD1, PTK2/FAK1, TLN1 and VCL. Interacts with APBB1IP, NRAP and TLN1. Interacts with CTNNB1 and this interaction is necessary for its localization to the cell-cell junctions and for its function in regulating cell surface expression of E-cadherin. Interacts with SORBS1. Interacts with SYNM. Interacts with CTNNA1. Binds to ACTN4; this interaction triggers conformational changes. Interacts with FLII. In terms of processing, phosphorylated; on serines, threonines and tyrosines. Phosphorylation on Tyr-1065 in activated platelets affects head-tail interactions and cell spreading but has no effect on actin binding nor on localization to focal adhesion plaques. Post-translationally, acetylated; mainly by myristic acid but also by a small amount of palmitic acid.

It is found in the cell membrane. The protein localises to the cell junction. It localises to the adherens junction. The protein resides in the focal adhesion. Its subcellular location is the cytoplasm. It is found in the cytoskeleton. The protein localises to the sarcolemma. It localises to the cell projection. The protein resides in the podosome. In terms of biological role, actin filament (F-actin)-binding protein involved in cell-matrix adhesion and cell-cell adhesion. Regulates cell-surface E-cadherin expression and potentiates mechanosensing by the E-cadherin complex. May also play important roles in cell morphology and locomotion. The chain is Vinculin from Rattus norvegicus (Rat).